Here is a 119-residue protein sequence, read N- to C-terminus: Large ribosomal subunit protein bL20c (119 aa).

The protein belongs to the bacterial ribosomal protein bL20 family.

Its subcellular location is the plastid. The protein localises to the chloroplast. In terms of biological role, binds directly to 23S ribosomal RNA and is necessary for the in vitro assembly process of the 50S ribosomal subunit. It is not involved in the protein synthesizing functions of that subunit. The chain is Large ribosomal subunit protein bL20c from Lolium perenne (Perennial ryegrass).